The sequence spans 142 residues: Large ribosomal subunit protein uL11 (142 aa).

The segment at 86 to 105 (LKSGSKEPGKQSAGQISRAK) is disordered.

It belongs to the universal ribosomal protein uL11 family. In terms of assembly, part of the ribosomal stalk of the 50S ribosomal subunit. Interacts with L10 and the large rRNA to form the base of the stalk. L10 forms an elongated spine to which L12 dimers bind in a sequential fashion forming a multimeric L10(L12)X complex. In terms of processing, one or more lysine residues are methylated.

Forms part of the ribosomal stalk which helps the ribosome interact with GTP-bound translation factors. In Chelativorans sp. (strain BNC1), this protein is Large ribosomal subunit protein uL11.